Here is a 361-residue protein sequence, read N- to C-terminus: dTDP-glucose 4,6-dehydratase (361 aa).

Residues Phe11 to Ile12, Asp32 to Thr35, Asp58 to Ile59, Leu80 to Ser84, and Thr99 contribute to the NAD(+) site. Residue Ser84 coordinates substrate. Position 133 (Thr133) interacts with substrate. Asp134 functions as the Proton donor in the catalytic mechanism. Catalysis depends on proton acceptor residues Glu135 and Tyr167. Residue Tyr167–Lys171 participates in NAD(+) binding. Asn196 contributes to the substrate binding site. Asn197 contacts NAD(+). Substrate-binding positions include Lys206 to Leu207, Pro222 to Tyr224, Arg231, Asn266, and Asp296 to His300.

Belongs to the NAD(P)-dependent epimerase/dehydratase family. dTDP-glucose dehydratase subfamily. Homodimer. Requires NAD(+) as cofactor.

It carries out the reaction dTDP-alpha-D-glucose = dTDP-4-dehydro-6-deoxy-alpha-D-glucose + H2O. Its pathway is carbohydrate biosynthesis; dTDP-L-rhamnose biosynthesis. It functions in the pathway bacterial outer membrane biogenesis; LPS O-antigen biosynthesis. Catalyzes the dehydration of dTDP-D-glucose to form dTDP-6-deoxy-D-xylo-4-hexulose via a three-step process involving oxidation, dehydration and reduction. This Escherichia coli protein is dTDP-glucose 4,6-dehydratase (rfbB).